The primary structure comprises 115 residues: Kunitz-type trypsin inhibitor 1 (115 aa).

The protein belongs to the protease inhibitor I3 (leguminous Kunitz-type inhibitor) family.

Its function is as follows. Exhibits Kunitz trypsin protease inhibitor activity. This chain is Kunitz-type trypsin inhibitor 1, found in Selenicereus undatus (Pitahaya).